An 831-amino-acid polypeptide reads, in one-letter code: DNA polymerase I, thermostable (831 aa).

The region spanning 174-258 (RPEQWVDYRA…TDLPLEVDFG (85 aa)) is the 5'-3' exonuclease domain. The polymerase stretch occupies residues 409–831 (ERLFQTLKER…LGEDWLSAKE (423 aa)).

This sequence belongs to the DNA polymerase type-A family.

The enzyme catalyses DNA(n) + a 2'-deoxyribonucleoside 5'-triphosphate = DNA(n+1) + diphosphate. Functionally, in addition to polymerase activity, this DNA polymerase exhibits 5'-3' exonuclease activity. The polypeptide is DNA polymerase I, thermostable (polA) (Thermus thermophilus).